Here is a 266-residue protein sequence, read N- to C-terminus: ES1 protein homolog, mitochondrial (266 aa).

Residues 1–39 constitute a mitochondrion transit peptide; it reads MAAVRVLVSPRLASALLPLSGRHRTTSQRAAIHSSAPRP. An N6-acetyllysine mark is found at Lys-149, Lys-155, and Lys-162. Lys-201 carries the post-translational modification N6-acetyllysine; alternate. At Lys-201 the chain carries N6-succinyllysine; alternate. N6-acetyllysine is present on Lys-217. Lys-221 and Lys-231 each carry N6-acetyllysine; alternate. N6-succinyllysine; alternate occurs at positions 221 and 231.

It belongs to the ES1 family.

It localises to the mitochondrion. This is ES1 protein homolog, mitochondrial from Rattus norvegicus (Rat).